Reading from the N-terminus, the 92-residue chain is Defensin alpha 4 (92 aa).

A signal peptide spans 1–19 (MKTLVLLSALVLLAFQVQA). A propeptide spanning residues 20-58 (DPIQNTDEETKTEEQPGEEDQAVSISFGGQEGSALHEKS) is cleaved from the precursor. The disordered stretch occupies residues 23–42 (QNTDEETKTEEQPGEEDQAV). 3 cysteine pairs are disulfide-bonded: Cys64/Cys89, Cys66/Cys81, and Cys71/Cys88.

It belongs to the alpha-defensin family. Paneth cells of the small bowel.

The protein localises to the secreted. The protein resides in the cytoplasmic vesicle. It localises to the secretory vesicle. Host-defense peptide that has antimicrobial activity. Exhibits activity against Gram-negative E.coli (in vitro). Probably contributes to the antimicrobial barrier function of the small bowel mucosa. The chain is Defensin alpha 4 from Mus musculus (Mouse).